Reading from the N-terminus, the 354-residue chain is Ferredoxin--NADP reductase, chloroplastic (354 aa).

The N-terminal 35 residues, 1–35 (MASLRKPSNHADRACSRRLRVATRVAGRRMCRPVA), are a transit peptide targeting the chloroplast. An FAD-binding FR-type domain is found at 69–198 (KAPFKAKVRS…TGPTGKVLLL (130 aa)). Lys118 and Lys124 each carry N6,N6,N6-trimethyllysine. Residues 130 to 133 (RLYS), 151 to 153 (CVR), and Tyr157 each bind FAD. Residues Ser133 and Arg153 each contribute to the NADP(+) site. Lys170 bears the N6,N6-dimethyllysine mark. FAD is bound by residues 172 to 174 (LCS) and Thr213. NADP(+) contacts are provided by residues Thr213, 245–246 (VG), 275–276 (SR), Lys285, 313–314 (GL), and Glu352.

This sequence belongs to the ferredoxin--NADP reductase type 1 family. FAD is required as a cofactor.

Its subcellular location is the plastid. It localises to the chloroplast stroma. The protein resides in the chloroplast thylakoid membrane. The enzyme catalyses 2 reduced [2Fe-2S]-[ferredoxin] + NADP(+) + H(+) = 2 oxidized [2Fe-2S]-[ferredoxin] + NADPH. It functions in the pathway energy metabolism; photosynthesis. May play a key role in regulating the relative amounts of cyclic and non-cyclic electron flow to meet the demands of the plant for ATP and reducing power. This Chlamydomonas reinhardtii (Chlamydomonas smithii) protein is Ferredoxin--NADP reductase, chloroplastic (PETH).